The following is a 38-amino-acid chain: MKVLASVKRICRNCKIIKRNGVVRVICSSDPRHKQRQG.

This sequence belongs to the bacterial ribosomal protein bL36 family.

This is Large ribosomal subunit protein bL36 from Cupriavidus metallidurans (strain ATCC 43123 / DSM 2839 / NBRC 102507 / CH34) (Ralstonia metallidurans).